The sequence spans 779 residues: Pleckstrin homology domain-containing family A member 4 (779 aa).

Residues 54–153 (PVHIRGWLHK…WLRALGRASR (100 aa)) form the PH domain. Disordered regions lie at residues 152-352 (SRAE…LPGP), 492-670 (AGLG…EGHR), and 691-764 (MTGG…LPQD). Residue S164 is modified to Phosphoserine. The span at 184–193 (SRGEEGRISE) shows a compositional bias: basic and acidic residues. The segment covering 315–332 (QHWSQEPRTQAHSGSPTY) has biased composition (polar residues). Residues 525 to 535 (PESLELSSPRS) are compositionally biased toward low complexity. Residues 536–551 (PETDWGRPPGGDKDLA) are compositionally biased toward basic and acidic residues. S559 bears the Phosphoserine mark. Over residues 594–603 (QLERMRRNQE) the composition is skewed to basic and acidic residues. The segment covering 647 to 663 (LRSSGSWSSPRNTTPYL) has biased composition (polar residues). The segment covering 704 to 724 (PGVPLPPSDPTRQETPPPRSP) has biased composition (pro residues).

In terms of tissue distribution, highly expressed in melanoma. Detected at low levels in heart, skeletal muscle, kidney, liver and small intestine.

The protein localises to the cytoplasm. Its subcellular location is the membrane. Functionally, binds specifically to phosphatidylinositol 3-phosphate (PtdIns3P), but not to other phosphoinositides. The protein is Pleckstrin homology domain-containing family A member 4 (PLEKHA4) of Homo sapiens (Human).